The chain runs to 487 residues: MERWWFNSMLFKKEFERRCGLNKSMGSLGPIENTSEDPNRKVKNIHSCSNVDYLFGVKDIRNFISDDTFLVSDRNGDSYSIYFDIENQIFEIDNDHSFLSELESSFYSYRNSSYLNNGFRGEDPYYNSYMYDTQYSWNNHINSCIDNYLQSQICIDTSIISGSENYGDSYIYRTICGGESRNSSENEGSSKRTRTKGSDLTIRESSNDLEVTQKYRHLWVQCENCYGLNYKKFLKSKMNICEQCGYHLKMSSSDRIELLIDAGTWDPMDEDMVSLDPIEFHSEEEPYKDRIDSYQRKTGLTEAVQTGIGQLNGIPVAIGVMDFQFMGGSMGSVVGEKITRLIEHAANQILPLIIVCASGGARMQEGSLSLMQMAKISSALYDYQLNKKLFYVSILTSPTTGGVTASFGMLGDIIIAEPNAYIAFAGKRVIEQTLNKTVPEGSQAAEYLFQKGLFDQIVPRNLLKSVLSELFKLHAFFPLNQKSSKIK.

The interval 180–201 (SRNSSENEGSSKRTRTKGSDLT) is disordered. A CoA carboxyltransferase N-terminal domain is found at 218-487 (LWVQCENCYG…PLNQKSSKIK (270 aa)). 4 residues coordinate Zn(2+): C222, C225, C241, and C244. The segment at 222–244 (CENCYGLNYKKFLKSKMNICEQC) adopts a C4-type zinc-finger fold.

This sequence belongs to the AccD/PCCB family. Acetyl-CoA carboxylase is a heterohexamer composed of biotin carboxyl carrier protein, biotin carboxylase and 2 subunits each of ACCase subunit alpha and ACCase plastid-coded subunit beta (accD). It depends on Zn(2+) as a cofactor.

The protein resides in the plastid. It localises to the chloroplast stroma. It carries out the reaction N(6)-carboxybiotinyl-L-lysyl-[protein] + acetyl-CoA = N(6)-biotinyl-L-lysyl-[protein] + malonyl-CoA. Its pathway is lipid metabolism; malonyl-CoA biosynthesis; malonyl-CoA from acetyl-CoA: step 1/1. Its function is as follows. Component of the acetyl coenzyme A carboxylase (ACC) complex. Biotin carboxylase (BC) catalyzes the carboxylation of biotin on its carrier protein (BCCP) and then the CO(2) group is transferred by the transcarboxylase to acetyl-CoA to form malonyl-CoA. The polypeptide is Acetyl-coenzyme A carboxylase carboxyl transferase subunit beta, chloroplastic (Atropa belladonna (Belladonna)).